A 425-amino-acid chain; its full sequence is Formyl-CoA:oxalate CoA-transferase (425 aa).

Residues 17–18 (QS), Arg-38, 72–75 (LDTK), 96–98 (NFG), Arg-104, and 136–139 (KVYE) contribute to the CoA site. Asp-168 serves as the catalytic Nucleophile. 247-249 (GGQ) serves as a coordination point for substrate.

The protein belongs to the CoA-transferase III family. Frc subfamily. As to quaternary structure, homodimer.

The catalysed reaction is formyl-CoA + oxalate = oxalyl-CoA + formate. It functions in the pathway metabolic intermediate degradation; oxalate degradation; CO(2) and formate from oxalate: step 1/2. Involved in the catabolism of oxalate and in the adapatation to low pH via the induction of the oxalate-dependent acid tolerance response (ATR). Catalyzes the transfer of the CoA moiety from formyl-CoA to oxalate. The polypeptide is Formyl-CoA:oxalate CoA-transferase (Rhodopseudomonas palustris (strain TIE-1)).